A 325-amino-acid chain; its full sequence is Oligopeptide transport system permease protein OppB (325 aa).

The next 6 helical transmembrane spans lie at tyrosine 12–serine 32, leucine 102–isoleucine 122, leucine 135–alanine 155, leucine 189–serine 208, isoleucine 248–valine 268, and threonine 290–leucine 310. The 217-residue stretch at isoleucine 95–serine 311 folds into the ABC transmembrane type-1 domain.

This sequence belongs to the binding-protein-dependent transport system permease family. OppBC subfamily. The complex is composed of an ATP-binding protein (OppD), two transmembrane proteins (OppB and OppC) and a solute-binding protein (OppA).

The protein localises to the cell inner membrane. Functionally, part of the ABC transporter complex OppABCD involved in the uptake of oligopeptides. Responsible for the translocation of the substrate across the membrane. This chain is Oligopeptide transport system permease protein OppB, found in Mycobacterium bovis (strain ATCC BAA-935 / AF2122/97).